Here is a 566-residue protein sequence, read N- to C-terminus: Membrane protein insertase YidC (566 aa).

The next 5 membrane-spanning stretches (helical) occupy residues 3-23 (IKRI…FNAW), 346-366 (GWLW…HAVV), 369-389 (WGWS…WFSA), 436-456 (GGCL…YVII), and 509-529 (MWIL…GLVL).

The protein belongs to the OXA1/ALB3/YidC family. Type 1 subfamily. Interacts with the Sec translocase complex via SecD. Specifically interacts with transmembrane segments of nascent integral membrane proteins during membrane integration.

The protein localises to the cell inner membrane. Its function is as follows. Required for the insertion and/or proper folding and/or complex formation of integral membrane proteins into the membrane. Involved in integration of membrane proteins that insert both dependently and independently of the Sec translocase complex, as well as at least some lipoproteins. Aids folding of multispanning membrane proteins. The sequence is that of Membrane protein insertase YidC from Coxiella burnetii (strain Dugway 5J108-111).